A 104-amino-acid polypeptide reads, in one-letter code: U20-lycotoxin-Ls1d (104 aa).

The first 30 residues, 1 to 30 (MFSTSDQVSKMNSRILSALLILGIATCVIA), serve as a signal peptide directing secretion. A WAP domain is found at 31–76 (GGFCPKSRHPQCNLSYKINDCCAQSDCRVGSVCCVEGCGNVCRAES). 5 cysteine pairs are disulfide-bonded: C34-C64, C42-C68, C51-C63, C52-C90, and C57-C72.

This sequence belongs to the venom protein 11 family. 02 (wap-2) subfamily. Post-translationally, contains 5 disulfide bonds. As to expression, expressed by the venom gland.

It localises to the secreted. Its function is as follows. Has antibacterial activity. In Lycosa singoriensis (Wolf spider), this protein is U20-lycotoxin-Ls1d.